The sequence spans 194 residues: MRQSSQVRQTTETKIKLSLQLDESTNVSIQTGIGFFDHMLTLFARHGRFGLQVEAEGDVFVDAHHTVEDVGIVLGNCLKEALQNKERINRYGSAYVPMDESLGFVAIDISGRSYCVFQGELTNPKLGDFDTELTEEFFRAVAHAANITLHARVLYGSNTHHKIEALFKAFGRALREAVEKNANITGVNSTKGML.

Belongs to the imidazoleglycerol-phosphate dehydratase family.

Its subcellular location is the cytoplasm. The catalysed reaction is D-erythro-1-(imidazol-4-yl)glycerol 3-phosphate = 3-(imidazol-4-yl)-2-oxopropyl phosphate + H2O. It functions in the pathway amino-acid biosynthesis; L-histidine biosynthesis; L-histidine from 5-phospho-alpha-D-ribose 1-diphosphate: step 6/9. The protein is Imidazoleglycerol-phosphate dehydratase of Bacillus cereus (strain G9842).